We begin with the raw amino-acid sequence, 1135 residues long: Potassium channel subfamily T member 2 (1135 aa).

At 1–63 (MVDLESEVPP…KNQRSSLRIR (63 aa)) the chain is on the cytoplasmic side. A helical membrane pass occupies residues 64–84 (LFNFSLKLLSCLLYIIRVLLE). The Extracellular portion of the chain corresponds to 85-101 (NPSQGNEWSHIFWVNRS). The N-linked (GlcNAc...) asparagine glycan is linked to N99. A helical membrane pass occupies residues 102–122 (LPLWGLQVSVALISLFETILL). Over 123–137 (GYLSYKGNIWEQILR) the chain is Cytoplasmic. Residues 138–158 (IPFILEIINAVPFIISIFWPS) traverse the membrane as a helical segment. Residues 159–164 (LRNLFV) are Extracellular-facing. The helical transmembrane segment at 165–185 (PVFLNCWLAKHALENMINDLH) threads the bilayer. Residues 186–198 (RAIQRTQSAMFNQ) lie on the Cytoplasmic side of the membrane. The chain crosses the membrane as a helical span at residues 199-219 (VLILISTLLCLIFTCICGIQH). The Extracellular portion of the chain corresponds to 220-228 (LERIGKKLN). Residues 229 to 249 (LFDSLYFCIVTFSTVGFGDVT) constitute an intramembrane region (pore-forming). Topologically, residues 250–256 (PETWSSK) are extracellular. A helical transmembrane segment spans residues 257–277 (LFVVAMICVALVVLPIQFEQL). Residues 278 to 1135 (AYLWMERQKS…GQDSREETQL (858 aa)) lie on the Cytoplasmic side of the membrane. RCK N-terminal domains are found at residues 299-435 (EKHV…DHVV) and 718-858 (NKLI…CYSL). Disordered stretches follow at residues 977–1010 (VEEWEDTKDSKEQGHHRSNHRNSTSSDQSDHPLL), 1017–1036 (WARRLSRKGPKHSGKTAEKI), and 1113–1135 (SEPSRRNSICNVTGQDSREETQL). Basic residues predominate over residues 1017-1030 (WARRLSRKGPKHSG). A compositionally biased stretch (polar residues) spans 1118 to 1127 (RNSICNVTGQ).

This sequence belongs to the potassium channel family. Calcium-activated (TC 1.A.1.3) subfamily. KCa4.2/KCNT2 sub-subfamily. In terms of assembly, homotetramer. Forms heteromeric channels with KCNT1; these heterodimer channels differ from the homomers in their unitary conductance, kinetic behavior, subcellular localization, and response to activation of protein kinase C. In terms of processing, phosphorylated by protein kinase C. Phosphorylation of the C-terminal domain inhibits channel activity.

It is found in the cell membrane. It catalyses the reaction K(+)(in) = K(+)(out). Its activity is regulated as follows. Are normally in a closed state unless activated by an increase in intracellular Na(+) and Cl(-). Inhibited upon stimulation of G-protein coupled receptors, such as CHRM1 and GRM1. There is conflicting data about the effect of ATP on KNCT2 channels activity. Intracellular ATP was initially report to inhibit the channel activity. However, others studies conclude that KNCT2 channels are not inhibited by intracellular ATP. Functionally, sodium-activated and chloride-activated potassium channel. Produces rapidly activating outward rectifier K(+) currents. Contributes to regulate neuronal excitability. In Homo sapiens (Human), this protein is Potassium channel subfamily T member 2 (KCNT2).